Here is a 107-residue protein sequence, read N- to C-terminus: Thiosulfate sulfurtransferase GlpE (107 aa).

A Rhodanese domain is found at 17–105 (RQGEAVLVDI…WLKAFPLETE (89 aa)). The active-site Cysteine persulfide intermediate is C65.

This sequence belongs to the GlpE family.

It localises to the cytoplasm. The catalysed reaction is thiosulfate + hydrogen cyanide = thiocyanate + sulfite + 2 H(+). It catalyses the reaction thiosulfate + [thioredoxin]-dithiol = [thioredoxin]-disulfide + hydrogen sulfide + sulfite + 2 H(+). Its function is as follows. Transferase that catalyzes the transfer of sulfur from thiosulfate to thiophilic acceptors such as cyanide or dithiols. May function in a CysM-independent thiosulfate assimilation pathway by catalyzing the conversion of thiosulfate to sulfite, which can then be used for L-cysteine biosynthesis. In Sodalis glossinidius (strain morsitans), this protein is Thiosulfate sulfurtransferase GlpE.